The primary structure comprises 485 residues: Adenosylhomocysteinase (485 aa).

Substrate contacts are provided by threonine 64, aspartate 139, and glutamate 205. Residue threonine 206 to threonine 208 coordinates NAD(+). The substrate site is built by lysine 235 and aspartate 239. NAD(+) contacts are provided by residues asparagine 240, glycine 269 to glycine 274, glutamate 292, asparagine 327, isoleucine 348 to histidine 350, and asparagine 397.

It belongs to the adenosylhomocysteinase family. Requires NAD(+) as cofactor.

It carries out the reaction S-adenosyl-L-homocysteine + H2O = L-homocysteine + adenosine. The protein operates within amino-acid biosynthesis; L-homocysteine biosynthesis; L-homocysteine from S-adenosyl-L-homocysteine: step 1/1. Functionally, adenosylhomocysteine is a competitive inhibitor of S-adenosyl-L-methionine-dependent methyl transferase reactions; therefore adenosylhomocysteinase may play a key role in the control of methylations via regulation of the intracellular concentration of adenosylhomocysteine. The chain is Adenosylhomocysteinase (SAHH) from Nicotiana sylvestris (Wood tobacco).